The following is a 432-amino-acid chain: Putative D-alanyl-D-alanine carboxypeptidase (432 aa).

Residues 7 to 25 (ATVLLTFSLSAFAVEYPVL) traverse the membrane as a helical; Signal-anchor segment.

It belongs to the peptidase S12 family. YfeW subfamily.

The protein resides in the cell inner membrane. The enzyme catalyses Preferential cleavage: (Ac)2-L-Lys-D-Ala-|-D-Ala. Also transpeptidation of peptidyl-alanyl moieties that are N-acyl substituents of D-alanine.. In Salmonella choleraesuis (strain SC-B67), this protein is Putative D-alanyl-D-alanine carboxypeptidase.